A 304-amino-acid polypeptide reads, in one-letter code: MENKDALDIGKDDTNTSEADVSKNETQEQPVLSKSALKRLKRQQEWDAGREKRAEMRREKKRLRKEERKRKIEAGEVVKSQKKRIRLGKVVPSSIRIVLDCAFDDLMNDKEINSLCQQVTRCHSANRTALHPVELFATNFGGRLKTRQDFVLKGQQNNWKRYNPTTKSYLEEFESQKEKLVYLSADSDNTITELDEDKIYIIGAIVDKNRYKNLCQNKASEQGIKTAKLPIDEYIKITDRKILTVNQVFEILSLWLEYRDWEKAFMEVIPKRKGILLKSDESFDVSEDTRSQSNQSDSELEKEN.

Basic and acidic residues-rich tracts occupy residues 1-26 (MENK…KNET) and 42-72 (RQQE…KRKI). The segment at 1 to 72 (MENKDALDIG…LRKEERKRKI (72 aa)) is disordered. One can recognise an SAM-dependent MTase TRM10-type domain in the interval 81–276 (QKKRIRLGKV…EVIPKRKGIL (196 aa)). Residues Leu-183, Gly-203, 207-211 (DKNRY), Cys-215, Leu-229, and 241-243 (KIL) contribute to the S-adenosyl-L-methionine site. The Proton acceptor role is filled by Asp-207. The disordered stretch occupies residues 282–304 (SFDVSEDTRSQSNQSDSELEKEN). Position 296 is a phosphoserine (Ser-296).

This sequence belongs to the class IV-like SAM-binding methyltransferase superfamily. TRM10 family. Monomer.

The protein resides in the cytoplasm. It localises to the nucleus. It carries out the reaction guanosine(9) in tRNA + S-adenosyl-L-methionine = N(1)-methylguanosine(9) in tRNA + S-adenosyl-L-homocysteine + H(+). Its function is as follows. S-adenosyl-L-methionine-dependent guanine N(1)-methyltransferase that catalyzes the formation of N(1)-methylguanine at position 9 (m1G9) in cytoplasmic tRNA. This Schizosaccharomyces pombe (strain 972 / ATCC 24843) (Fission yeast) protein is tRNA (guanine(9)-N1)-methyltransferase.